A 221-amino-acid chain; its full sequence is Thiamine-phosphate synthase (221 aa).

4-amino-2-methyl-5-(diphosphooxymethyl)pyrimidine-binding positions include Gln46–Lys50 and Asn83. Mg(2+) is bound by residues Asp84 and Asp103. Ser122 provides a ligand contact to 4-amino-2-methyl-5-(diphosphooxymethyl)pyrimidine. Thr149–Ser151 is a binding site for 2-[(2R,5Z)-2-carboxy-4-methylthiazol-5(2H)-ylidene]ethyl phosphate. A 4-amino-2-methyl-5-(diphosphooxymethyl)pyrimidine-binding site is contributed by Lys152. 2-[(2R,5Z)-2-carboxy-4-methylthiazol-5(2H)-ylidene]ethyl phosphate is bound by residues Gly181 and Ile201–Ser202.

The protein belongs to the thiamine-phosphate synthase family. Mg(2+) serves as cofactor.

It carries out the reaction 2-[(2R,5Z)-2-carboxy-4-methylthiazol-5(2H)-ylidene]ethyl phosphate + 4-amino-2-methyl-5-(diphosphooxymethyl)pyrimidine + 2 H(+) = thiamine phosphate + CO2 + diphosphate. It catalyses the reaction 2-(2-carboxy-4-methylthiazol-5-yl)ethyl phosphate + 4-amino-2-methyl-5-(diphosphooxymethyl)pyrimidine + 2 H(+) = thiamine phosphate + CO2 + diphosphate. The catalysed reaction is 4-methyl-5-(2-phosphooxyethyl)-thiazole + 4-amino-2-methyl-5-(diphosphooxymethyl)pyrimidine + H(+) = thiamine phosphate + diphosphate. Its pathway is cofactor biosynthesis; thiamine diphosphate biosynthesis; thiamine phosphate from 4-amino-2-methyl-5-diphosphomethylpyrimidine and 4-methyl-5-(2-phosphoethyl)-thiazole: step 1/1. In terms of biological role, condenses 4-methyl-5-(beta-hydroxyethyl)thiazole monophosphate (THZ-P) and 2-methyl-4-amino-5-hydroxymethyl pyrimidine pyrophosphate (HMP-PP) to form thiamine monophosphate (TMP). This Actinobacillus succinogenes (strain ATCC 55618 / DSM 22257 / CCUG 43843 / 130Z) protein is Thiamine-phosphate synthase.